The sequence spans 482 residues: Putative transposase R186 (482 aa).

Cys416, Cys419, Cys433, and Cys435 together coordinate Zn(2+).

It in the central section; belongs to the transposase 2 family. The protein in the C-terminal section; belongs to the transposase 35 family.

The protein is Putative transposase R186 of Acanthamoeba polyphaga (Amoeba).